A 394-amino-acid chain; its full sequence is Acetate kinase (394 aa).

Asn-7 serves as a coordination point for Mg(2+). ATP is bound at residue Lys-14. Arg-88 contributes to the substrate binding site. Catalysis depends on Asp-145, which acts as the Proton donor/acceptor. ATP-binding positions include 205-209 (HLGNG), 279-281 (DFR), and 327-331 (GIGEN). Residue Glu-379 coordinates Mg(2+).

It belongs to the acetokinase family. In terms of assembly, homodimer. Mg(2+) serves as cofactor. Requires Mn(2+) as cofactor.

It is found in the cytoplasm. The catalysed reaction is acetate + ATP = acetyl phosphate + ADP. The protein operates within metabolic intermediate biosynthesis; acetyl-CoA biosynthesis; acetyl-CoA from acetate: step 1/2. Catalyzes the formation of acetyl phosphate from acetate and ATP. Can also catalyze the reverse reaction. The protein is Acetate kinase of Campylobacter lari (strain RM2100 / D67 / ATCC BAA-1060).